The following is a 318-amino-acid chain: uncharacterized protein (318 aa).

The next 4 helical transmembrane spans lie at 112–132 (VIGVLSFLFSKFVFTLVPVFL), 147–167 (IAIESLFKLILLLGYIYFLSM), 209–229 (CGSSFILFTIIVGMFVYLLVP), and 237–257 (VIDRVALIPVVLGISFEVLQL).

It localises to the cell membrane. This is an uncharacterized protein from Bacillus subtilis (strain 168).